The sequence spans 164 residues: Putative anionic 4-hydroxy-benzoate permease (164 aa).

The disordered stretch occupies residues 1 to 30 (CGRRRGSLAWPDASSPSANPRPGAGAAESS). 3 helical membrane-spanning segments follow: residues 62–82 (LWVA…LMFM), 97–117 (GMAQ…VGGL), and 126–146 (PALT…MLAG).

The protein belongs to the major facilitator superfamily. Cyanate porter (TC 2.A.1.17) family.

Its subcellular location is the cell membrane. In terms of biological role, may be involved in uptake of anionic 4-hydroxy-benzoate. This chain is Putative anionic 4-hydroxy-benzoate permease, found in Thauera aromatica.